The chain runs to 77 residues: Acyl carrier protein (77 aa).

The Carrier domain maps to 2 to 77 (STIEERVKKI…EAIDYVVSHQ (76 aa)). Ser-37 carries the post-translational modification O-(pantetheine 4'-phosphoryl)serine.

It belongs to the acyl carrier protein (ACP) family. 4'-phosphopantetheine is transferred from CoA to a specific serine of apo-ACP by AcpS. This modification is essential for activity because fatty acids are bound in thioester linkage to the sulfhydryl of the prosthetic group.

The protein resides in the cytoplasm. It functions in the pathway lipid metabolism; fatty acid biosynthesis. In terms of biological role, carrier of the growing fatty acid chain in fatty acid biosynthesis. In Oceanospirillum linum, this protein is Acyl carrier protein.